Reading from the N-terminus, the 584-residue chain is Long-chain-fatty-acid--AMP ligase FadD26 (584 aa).

Belongs to the ATP-dependent AMP-binding enzyme family.

It catalyses the reaction holo-[(phenol)carboxyphthiodiolenone synthase] + a long-chain fatty acid + ATP = a long-chain fatty acyl-[(phenol)carboxyphthiodiolenone synthase] + AMP + diphosphate. The enzyme catalyses eicosanoate + holo-[(phenol)carboxyphthiodiolenone synthase] + ATP = icosanoyl-[(phenol)carboxyphthiodiolenone synthase] + AMP + diphosphate. The catalysed reaction is holo-[(phenol)carboxyphthiodiolenone synthase] + docosanoate + ATP = docosanoyl-[(phenol)carboxyphthiodiolenone synthase] + AMP + diphosphate. It functions in the pathway lipid metabolism; fatty acid biosynthesis. Functionally, catalyzes the activation of long-chain fatty acids as acyl-adenylates (acyl-AMP), which are then transferred to the multifunctional polyketide synthase PpsA for further chain extension. Catalyzes the adenylation of the long-chain fatty acids eicosanoate (C20) or docosanoate (C22), and potentially the very-long-chain fatty acid lignocerate (C24). Involved in the biosynthesis of phthiocerol dimycocerosate (DIM A) and phthiodiolone dimycocerosate (DIM B). The polypeptide is Long-chain-fatty-acid--AMP ligase FadD26 (Mycobacterium marinum (strain ATCC BAA-535 / M)).